Here is a 251-residue protein sequence, read N- to C-terminus: Triosephosphate isomerase (251 aa).

Position 12-14 (12-14 (NWK)) interacts with substrate. The active-site Electrophile is the H98. E168 serves as the catalytic Proton acceptor. Residues G174, S213, and 234 to 235 (GG) contribute to the substrate site.

Belongs to the triosephosphate isomerase family. Homodimer.

The protein localises to the cytoplasm. It carries out the reaction D-glyceraldehyde 3-phosphate = dihydroxyacetone phosphate. It participates in carbohydrate biosynthesis; gluconeogenesis. It functions in the pathway carbohydrate degradation; glycolysis; D-glyceraldehyde 3-phosphate from glycerone phosphate: step 1/1. Functionally, involved in the gluconeogenesis. Catalyzes stereospecifically the conversion of dihydroxyacetone phosphate (DHAP) to D-glyceraldehyde-3-phosphate (G3P). The chain is Triosephosphate isomerase from Afipia carboxidovorans (strain ATCC 49405 / DSM 1227 / KCTC 32145 / OM5) (Oligotropha carboxidovorans).